The following is a 256-amino-acid chain: Undecaprenyl-diphosphatase (256 aa).

A run of 8 helical transmembrane segments spans residues Ile5–Ser25, Asn41–Phe61, Leu74–Ser94, Leu100–Tyr120, Leu135–Val155, Phe180–Gly200, Leu208–Leu228, and Phe234–Ile254.

Belongs to the UppP family.

It is found in the cell inner membrane. It catalyses the reaction di-trans,octa-cis-undecaprenyl diphosphate + H2O = di-trans,octa-cis-undecaprenyl phosphate + phosphate + H(+). In terms of biological role, catalyzes the dephosphorylation of undecaprenyl diphosphate (UPP). Confers resistance to bacitracin. The sequence is that of Undecaprenyl-diphosphatase from Pelagibacter ubique (strain HTCC1062).